Consider the following 128-residue polypeptide: Cytochrome c-type biogenesis protein CcmE (128 aa).

Topologically, residues 1-8 are cytoplasmic; that stretch reads MQKRVRNR. The helical; Signal-anchor for type II membrane protein transmembrane segment at 9–29 threads the bilayer; that stretch reads LITIIICFCSAALGISIVLYN. Over 30-128 the chain is Periplasmic; that stretch reads LEKNIVFFLP…KHDENYRPPS (99 aa). 2 residues coordinate heme: H120 and Y124.

This sequence belongs to the CcmE/CycJ family.

It is found in the cell inner membrane. Functionally, heme chaperone required for the biogenesis of c-type cytochromes. Transiently binds heme delivered by CcmC and transfers the heme to apo-cytochromes in a process facilitated by CcmF and CcmH. The sequence is that of Cytochrome c-type biogenesis protein CcmE from Rickettsia felis (strain ATCC VR-1525 / URRWXCal2) (Rickettsia azadi).